The following is a 510-amino-acid chain: Histidine ammonia-lyase (510 aa).

The 5-imidazolinone (Ala-Gly) cross-link spans 143 to 145; the sequence is ASG. Ser-144 bears the 2,3-didehydroalanine (Ser) mark.

This sequence belongs to the PAL/histidase family. In terms of processing, contains an active site 4-methylidene-imidazol-5-one (MIO), which is formed autocatalytically by cyclization and dehydration of residues Ala-Ser-Gly.

Its subcellular location is the cytoplasm. It catalyses the reaction L-histidine = trans-urocanate + NH4(+). It participates in amino-acid degradation; L-histidine degradation into L-glutamate; N-formimidoyl-L-glutamate from L-histidine: step 1/3. This chain is Histidine ammonia-lyase, found in Shewanella pealeana (strain ATCC 700345 / ANG-SQ1).